Consider the following 192-residue polypeptide: Peptidyl-tRNA hydrolase (192 aa).

Position 18 (tyrosine 18) interacts with tRNA. Catalysis depends on histidine 23, which acts as the Proton acceptor. TRNA-binding residues include phenylalanine 69, asparagine 71, and asparagine 117.

It belongs to the PTH family. Monomer.

The protein resides in the cytoplasm. It carries out the reaction an N-acyl-L-alpha-aminoacyl-tRNA + H2O = an N-acyl-L-amino acid + a tRNA + H(+). Its function is as follows. Hydrolyzes ribosome-free peptidyl-tRNAs (with 1 or more amino acids incorporated), which drop off the ribosome during protein synthesis, or as a result of ribosome stalling. In terms of biological role, catalyzes the release of premature peptidyl moieties from peptidyl-tRNA molecules trapped in stalled 50S ribosomal subunits, and thus maintains levels of free tRNAs and 50S ribosomes. The protein is Peptidyl-tRNA hydrolase of Neisseria gonorrhoeae (strain ATCC 700825 / FA 1090).